Here is a 125-residue protein sequence, read N- to C-terminus: uncharacterized protein (125 aa).

A Cupin type-2 domain is found at Ile45–Cys110.

This is an uncharacterized protein from Methanocaldococcus jannaschii (strain ATCC 43067 / DSM 2661 / JAL-1 / JCM 10045 / NBRC 100440) (Methanococcus jannaschii).